We begin with the raw amino-acid sequence, 337 residues long: uncharacterized protein (337 aa).

It belongs to the mimivirus R69 family.

This is an uncharacterized protein from Acanthamoeba polyphaga mimivirus (APMV).